The chain runs to 357 residues: DENN domain-containing protein 10 (357 aa).

The uDENN domain occupies 1 to 140 (MAAAEVADTQ…TKGICQSEEN (140 aa)). In terms of domain architecture, cDENN spans 165–299 (QFGMETVILH…PEKSESHVIQ (135 aa)). Residues 301 to 357 (IALKTREIFTNLAPFSEVSADGEKRVLNLEALKQKRFPPATENFLYHLAAAEQMLKI) enclose the dDENN domain.

Belongs to the DENND10 family. In terms of assembly, interacts with the coiled-coil heterodimer of CCDC22 and CCDC93; the interaction is direct. Interacts with RAB27A and RAB27B (GDP-bound forms preferentially).

It is found in the late endosome. Functionally, guanine nucleotide exchange factor (GEF) regulating homeostasis of late endocytic pathway, including endosomal positioning, maturation and secretion, possibly through activating Rab proteins such as RAB27A and RAB27B. Promotes the exchange of GDP to GTP, converting inactive GDP-bound RAB27A and RAB27B into their active GTP-bound form. The protein is DENN domain-containing protein 10 of Homo sapiens (Human).